The primary structure comprises 106 residues: Putative toxin Rv3098A/RVBD_3098A (106 aa).

The protein belongs to the PemK/MazF family. As to quaternary structure, forms a complex with cognate antitoxin Rv3098B/RVBD_3098B.

In terms of biological role, putative toxic component of a possible type II toxin-antitoxin (TA) system. Its toxic effect may be neutralized by cognate antitoxin Rv3098B/RVBD_3098B. This is Putative toxin Rv3098A/RVBD_3098A from Mycobacterium tuberculosis (strain ATCC 25618 / H37Rv).